The chain runs to 465 residues: Methionine aminopeptidase 2-2 (465 aa).

The segment covering Met1 to Pro13 has biased composition (basic and acidic residues). The tract at residues Met1–Gln92 is disordered. A compositionally biased stretch (acidic residues) spans Gly44–Asp55. Basic residues predominate over residues Thr71–Thr86. Residue His217 participates in substrate binding. Positions 238, 249, and 318 each coordinate a divalent metal cation. Residue His326 participates in substrate binding. Glu351 and Glu446 together coordinate a divalent metal cation.

Belongs to the peptidase M24A family. Methionine aminopeptidase eukaryotic type 2 subfamily. Co(2+) serves as cofactor. The cofactor is Zn(2+). Requires Mn(2+) as cofactor. Fe(2+) is required as a cofactor.

It is found in the cytoplasm. It carries out the reaction Release of N-terminal amino acids, preferentially methionine, from peptides and arylamides.. In terms of biological role, cotranslationally removes the N-terminal methionine from nascent proteins. The N-terminal methionine is often cleaved when the second residue in the primary sequence is small and uncharged (Met-Ala-, Cys, Gly, Pro, Ser, Thr, or Val). The chain is Methionine aminopeptidase 2-2 from Blastomyces gilchristii (strain SLH14081) (Blastomyces dermatitidis).